The chain runs to 133 residues: MEAFLGTWKMEKSEGFDKIMERLGVDFVTRKMGNLVKPNLIVTDLGGGKYKMRSESTFKTTECSFKLGEKFKEVTPDSREVASLITVENGVMKHEQDDKTKVTYIERVVEGNELKATVKVDEVVCVRTYSKVA.

The residue at position 1 (Met1) is an N-acetylmethionine. Hexadecanoate is bound by residues Arg107 and 127–129 (RTY).

It belongs to the calycin superfamily. Fatty-acid binding protein (FABP) family.

Functionally, has been implicated in the acquisition, storage, and transport of lipids, and may be important to the organism since it is incapable of synthesizing most of its lipids de novo. The sequence is that of Fatty acid-binding protein homolog 1 (FABP1) from Echinococcus granulosus (Hydatid tapeworm).